Here is a 433-residue protein sequence, read N- to C-terminus: Glutamate-1-semialdehyde 2,1-aminomutase (433 aa).

Lysine 271 bears the N6-(pyridoxal phosphate)lysine mark.

It belongs to the class-III pyridoxal-phosphate-dependent aminotransferase family. HemL subfamily. In terms of assembly, homodimer. The cofactor is pyridoxal 5'-phosphate.

Its subcellular location is the cytoplasm. It catalyses the reaction (S)-4-amino-5-oxopentanoate = 5-aminolevulinate. The protein operates within porphyrin-containing compound metabolism; protoporphyrin-IX biosynthesis; 5-aminolevulinate from L-glutamyl-tRNA(Glu): step 2/2. It functions in the pathway porphyrin-containing compound metabolism; chlorophyll biosynthesis. This chain is Glutamate-1-semialdehyde 2,1-aminomutase, found in Prochlorococcus marinus (strain MIT 9515).